The following is a 412-amino-acid chain: Candidapepsin-2 (412 aa).

The segment at residues 1–25 (MTTIAIFTKNVLLAIAFALFAQGAA) is a signal peptide (or 18, or 21). Positions 26-61 (IPDPAKRDDNPGFVALDFEVTRKPLDVNATSELSKR) are cleaved as a propeptide — activation peptide. N53 carries N-linked (GlcNAc...) asparagine glycosylation. One can recognise a Peptidase A1 domain in the interval 75-383 (YGIRVSVGSN…LDKETVLSRS (309 aa)). Residue D93 is part of the active site. A disulfide bond links C108 and C113. D273 is a catalytic residue. Residues C311 and C345 are joined by a disulfide bond.

This sequence belongs to the peptidase A1 family. In terms of processing, O-glycosylated.

It localises to the secreted. The catalysed reaction is Preferential cleavage at the carboxyl of hydrophobic amino acids, but fails to cleave 15-Leu-|-Tyr-16, 16-Tyr-|-Leu-17 and 24-Phe-|-Phe-25 of insulin B chain. Activates trypsinogen, and degrades keratin.. This is Candidapepsin-2 (SAPP2) from Candida parapsilosis (Yeast).